The following is a 321-amino-acid chain: MSYHKSSGTILMVPLFMLLISVNYFMSCNAQLSTTFYDTTCPTALSTIRTSIRSSVSSNRRNAALVIRLLFHDCFVQGCDASLLLSGAGSERASPANDGVLGYEVIDAAKAAVERVCPGVVSCADILAVAARDASVAVGGPSWTVRLGRRDSTTSNAAQAATDLPRGNMVLSQLISNFANKGLNTREMVALSGSHTLGQARCIRFRGRIYNSTLRIEPNFNRSLSQACPPTGNDATLRPLDLVTPNSFDNNYYRNLVTSRGLLISDQVLFNADSTDSIVTEYVNNPATFAADFAAAMVKMSEIGVVTGTSGIVRTLCGNPS.

An N-terminal signal peptide occupies residues M1–A30. Q31 is modified (pyrrolidone carboxylic acid). 4 disulfide bridges follow: C41–C117, C74–C79, C123–C317, and C202–C228. The active-site Proton acceptor is the H72. Ca(2+) contacts are provided by D73, V76, G78, D80, and S82. P165 contributes to the substrate binding site. Position 195 (H195) interacts with heme b. A Ca(2+)-binding site is contributed by T196. N-linked (GlcNAc...) asparagine glycosylation is found at N211 and N221. Positions 241, 244, and 249 each coordinate Ca(2+).

Belongs to the peroxidase family. Classical plant (class III) peroxidase subfamily. Heme b is required as a cofactor. Ca(2+) serves as cofactor. Post-translationally, N-glycosylated. As to expression, expressed in tracheary elements, roots, young and old hypocotyls, and stems in the partially glycosylated form and in roots and young hypocotyls in the fully glycosylated form. None of the isoforms is significantly expressed in leaves or cotyledons.

The protein resides in the secreted. The enzyme catalyses 2 a phenolic donor + H2O2 = 2 a phenolic radical donor + 2 H2O. Functionally, removal of H(2)O(2), oxidation of toxic reductants, biosynthesis and degradation of lignin, suberization, auxin catabolism, response to environmental stresses such as wounding, pathogen attack and oxidative stress. These functions might be dependent on each isozyme/isoform in each plant tissue. Involved in the synthesis of highly polymerized lignins. This chain is Basic peroxidase (POD1), found in Zinnia elegans (Garden zinnia).